Here is a 346-residue protein sequence, read N- to C-terminus: Methionine import ATP-binding protein MetN 1 (346 aa).

The ABC transporter domain occupies 2–241 (IEFKQVTKTF…PQHPTTEKFV (240 aa)). Residue 38-45 (GFSGAGKS) coordinates ATP.

The protein belongs to the ABC transporter superfamily. Methionine importer (TC 3.A.1.24) family. As to quaternary structure, the complex is composed of two ATP-binding proteins (MetN), two transmembrane proteins (MetI) and a solute-binding protein (MetQ).

Its subcellular location is the cell membrane. The enzyme catalyses L-methionine(out) + ATP + H2O = L-methionine(in) + ADP + phosphate + H(+). It carries out the reaction D-methionine(out) + ATP + H2O = D-methionine(in) + ADP + phosphate + H(+). Part of the ABC transporter complex MetNIQ involved in methionine import. Responsible for energy coupling to the transport system. The protein is Methionine import ATP-binding protein MetN 1 of Shouchella clausii (strain KSM-K16) (Alkalihalobacillus clausii).